Reading from the N-terminus, the 284-residue chain is Sulfotransferase 4A1 (284 aa).

Residues Thr-8, Thr-11, and Thr-205 each carry the phosphothreonine modification.

It belongs to the sulfotransferase 1 family. Highly expressed in the cerebral cortex and frontal lobe, slightly less in the cerebellum, occipital and temporal lobes, relatively low in the medulla and putamen, and lowest in the spinal cord. No expression detected in the pancreas. Highly expressed in fetal brain and occipital lobe, slightly less in the whole brain, frontal lobe, hippocampus, and lung, very low expression in cerebellum, medulla oblongata, temporal lobe, testis, kidney and appendix.

The protein resides in the cytoplasm. Atypical sulfotransferase family member with very low affinity for 3'-phospho-5'-adenylyl sulfate (PAPS) and very low catalytic activity towards L-triiodothyronine, thyroxine, estrone, p-nitrophenol, 2-naphthylamine, and 2-beta-naphthol. May have a role in the metabolism of drugs and neurotransmitters in the CNS. The polypeptide is Sulfotransferase 4A1 (SULT4A1) (Homo sapiens (Human)).